Reading from the N-terminus, the 224-residue chain is 2-C-methyl-D-erythritol 4-phosphate cytidylyltransferase (224 aa).

Belongs to the IspD/TarI cytidylyltransferase family. IspD subfamily.

The enzyme catalyses 2-C-methyl-D-erythritol 4-phosphate + CTP + H(+) = 4-CDP-2-C-methyl-D-erythritol + diphosphate. The protein operates within isoprenoid biosynthesis; isopentenyl diphosphate biosynthesis via DXP pathway; isopentenyl diphosphate from 1-deoxy-D-xylulose 5-phosphate: step 2/6. Catalyzes the formation of 4-diphosphocytidyl-2-C-methyl-D-erythritol from CTP and 2-C-methyl-D-erythritol 4-phosphate (MEP). The protein is 2-C-methyl-D-erythritol 4-phosphate cytidylyltransferase of Bordetella petrii (strain ATCC BAA-461 / DSM 12804 / CCUG 43448).